The following is a 580-amino-acid chain: Viral transcription factor IE2 (580 aa).

Positions 1 to 11 (MESSAKRKMDP) are enriched in basic and acidic residues. 2 disordered regions span residues 1-30 (MESS…TPVT) and 99-161 (DSSS…VIIK). A compositionally biased stretch (polar residues) spans 99–133 (DSSSTGPTLTTHSCSVSSAPLNKPTPTSVAVTNTP). Glycyl lysine isopeptide (Lys-Gly) (interchain with G-Cter in SUMO) cross-links involve residues Lys-175 and Lys-180. Residues 199–202 (CIVI) carry the SUMO-interacting motif 1/SIM1 motif. 2 positions are modified to phosphoserine; by host CK2: Ser-203 and Ser-205. Positions 206–335 (EEEQGEEVET…KSKRISELDN (130 aa)) are disordered. 3 stretches are compositionally biased toward low complexity: residues 216-236 (RGAT…TSPT), 259-271 (SSSS…SASD), and 302-317 (AASS…SSGG). The SUMO-interacting motif 1/SIM2 motif lies at 410 to 413 (IQII). The SUMO-interacting motif 1/SIM3 signature appears at 501–504 (VDLL).

Belongs to the HHV-5 IE2 protein family. As to quaternary structure, interacts with host SUMO-modified form of TATA-binding protein (TBP)-associated factor 12/TAF12 in a SIM-dependent manner; this interaction increases the transactivation activity of IE2. Interacts with host CHAF1A. Interacts with several components of the host transcriptional machinery including TBP, TF2B and CREB1. Interacts with host DNA replication licensing factor MCM3. Interacts with host PLSCR1; this interaction inhibits IE2 transactivating activity. In terms of processing, phosphorylated by host CK2 at Ser-203 and Ser-205; leading to enhanced SUMOylation. Post-translationally, SUMOylated; SUMOylation is enhanced when IE2 is phosphorylated by host CK2. The sumoylation is necessary for efficient replication of the virus and thus for the function of this viral transcription factor.

The protein resides in the host nucleus. Functionally, stimulates viral early and late gene expression and thus play a crucial role in the regulation of productive infection. Selectively drives host RNA Pol II transcription initiation at a subset of viral early-late and late promoters without substantially affecting Pol II transcription of expressed host genes. Mechanistically, forms a repressive complex at the major immediate-early promoter region involving direct association with host nucleosomes and TBP. Concerning activation, stimulates transcription by binding nearby, but not within, core promoter regions. In addition, activates quiescent cells to reenter the cell cycle and up-regulates several E2F-responsive genes, which are responsible for pushing the cell into S phase. In S-phase, inhibits cellular DNA synthesis and blocks further cell cycle progression. The polypeptide is Viral transcription factor IE2 (UL122) (Human cytomegalovirus (strain AD169) (HHV-5)).